The primary structure comprises 313 residues: Acetyl-coenzyme A carboxylase carboxyl transferase subunit beta (313 aa).

The CoA carboxyltransferase N-terminal domain maps to 24–293 (LWIKCPDSGQ…LETASKSVQP (270 aa)).

It belongs to the AccD/PCCB family. Acetyl-CoA carboxylase is a heterohexamer composed of biotin carboxyl carrier protein (AccB), biotin carboxylase (AccC) and two subunits each of ACCase subunit alpha (AccA) and ACCase subunit beta (AccD).

Its subcellular location is the cytoplasm. It catalyses the reaction N(6)-carboxybiotinyl-L-lysyl-[protein] + acetyl-CoA = N(6)-biotinyl-L-lysyl-[protein] + malonyl-CoA. Its pathway is lipid metabolism; malonyl-CoA biosynthesis; malonyl-CoA from acetyl-CoA: step 1/1. Component of the acetyl coenzyme A carboxylase (ACC) complex. Biotin carboxylase (BC) catalyzes the carboxylation of biotin on its carrier protein (BCCP) and then the CO(2) group is transferred by the transcarboxylase to acetyl-CoA to form malonyl-CoA. The protein is Acetyl-coenzyme A carboxylase carboxyl transferase subunit beta of Bradyrhizobium diazoefficiens (strain JCM 10833 / BCRC 13528 / IAM 13628 / NBRC 14792 / USDA 110).